The sequence spans 68 residues: Guanine nucleotide-binding protein G(I)/G(S)/G(O) subunit gamma-10 (68 aa).

At Ser2 the chain carries N-acetylserine. Cys65 carries the cysteine methyl ester modification. The S-geranylgeranyl cysteine moiety is linked to residue Cys65. A propeptide spans 66–68 (ALL) (removed in mature form).

The protein belongs to the G protein gamma family. In terms of assembly, g proteins are composed of 3 units, alpha, beta and gamma. As to expression, abundantly and ubiquitously expressed.

It localises to the cell membrane. In terms of biological role, guanine nucleotide-binding proteins (G proteins) are involved as a modulator or transducer in various transmembrane signaling systems. The beta and gamma chains are required for the GTPase activity, for replacement of GDP by GTP, and for G protein-effector interaction. Interacts with beta-1 and beta-2, but not with beta-3. The sequence is that of Guanine nucleotide-binding protein G(I)/G(S)/G(O) subunit gamma-10 (GNG10) from Homo sapiens (Human).